The chain runs to 446 residues: Adenylosuccinate synthetase (446 aa).

GTP-binding positions include 12–18 (GDEGKGK) and 40–42 (GHT). D13 functions as the Proton acceptor in the catalytic mechanism. Mg(2+) contacts are provided by D13 and G40. Residues 13 to 16 (DEGK), 38 to 41 (NAGH), T128, R142, Q223, T238, and R302 contribute to the IMP site. H41 serves as the catalytic Proton donor. 298-304 (TTTGRRR) is a binding site for substrate. Residues R304, 330–332 (KLD), and 412–414 (SLG) contribute to the GTP site.

The protein belongs to the adenylosuccinate synthetase family. Homodimer. Requires Mg(2+) as cofactor.

Its subcellular location is the cytoplasm. The enzyme catalyses IMP + L-aspartate + GTP = N(6)-(1,2-dicarboxyethyl)-AMP + GDP + phosphate + 2 H(+). It participates in purine metabolism; AMP biosynthesis via de novo pathway; AMP from IMP: step 1/2. Its function is as follows. Plays an important role in the de novo pathway of purine nucleotide biosynthesis. Catalyzes the first committed step in the biosynthesis of AMP from IMP. The polypeptide is Adenylosuccinate synthetase (Crocosphaera subtropica (strain ATCC 51142 / BH68) (Cyanothece sp. (strain ATCC 51142))).